A 283-amino-acid polypeptide reads, in one-letter code: 4-hydroxy-tetrahydrodipicolinate reductase (283 aa).

NAD(+)-binding positions include 15 to 20 and 116 to 118; these read GALGRM and GTT. The active-site Proton donor/acceptor is His172. Residue His173 participates in (S)-2,3,4,5-tetrahydrodipicolinate binding. Residue Lys176 is the Proton donor of the active site. A (S)-2,3,4,5-tetrahydrodipicolinate-binding site is contributed by 182 to 183; sequence GT.

This sequence belongs to the DapB family.

The protein localises to the cytoplasm. The catalysed reaction is (S)-2,3,4,5-tetrahydrodipicolinate + NAD(+) + H2O = (2S,4S)-4-hydroxy-2,3,4,5-tetrahydrodipicolinate + NADH + H(+). The enzyme catalyses (S)-2,3,4,5-tetrahydrodipicolinate + NADP(+) + H2O = (2S,4S)-4-hydroxy-2,3,4,5-tetrahydrodipicolinate + NADPH + H(+). Its pathway is amino-acid biosynthesis; L-lysine biosynthesis via DAP pathway; (S)-tetrahydrodipicolinate from L-aspartate: step 4/4. Catalyzes the conversion of 4-hydroxy-tetrahydrodipicolinate (HTPA) to tetrahydrodipicolinate. In Prochlorococcus marinus (strain MIT 9313), this protein is 4-hydroxy-tetrahydrodipicolinate reductase.